The primary structure comprises 442 residues: Proline--tRNA ligase (442 aa).

Belongs to the class-II aminoacyl-tRNA synthetase family. ProS type 2 subfamily. As to quaternary structure, homodimer.

The protein localises to the cytoplasm. It carries out the reaction tRNA(Pro) + L-proline + ATP = L-prolyl-tRNA(Pro) + AMP + diphosphate. Catalyzes the attachment of proline to tRNA(Pro) in a two-step reaction: proline is first activated by ATP to form Pro-AMP and then transferred to the acceptor end of tRNA(Pro). In Brucella melitensis biotype 2 (strain ATCC 23457), this protein is Proline--tRNA ligase.